We begin with the raw amino-acid sequence, 332 residues long: 2,3-bisphosphoglycerate-dependent phosphoglycerate mutase 2 (332 aa).

The N-terminal 48 residues, 1 to 48 (MATSTTMSHQAIGSVVSQRPFKASQFLKEPLNNVPMKFRQKRFKIEAT), are a transit peptide targeting the chloroplast. Substrate contacts are provided by residues 85–92 (RHGESLWN), 98–99 (TG), R135, 189–192 (ERMY), K200, 216–217 (RR), and 260–261 (GN). Catalysis depends on H86, which acts as the Tele-phosphohistidine intermediate. Residue E189 is the Proton donor/acceptor of the active site.

It belongs to the phosphoglycerate mutase family. BPG-dependent PGAM subfamily.

Its subcellular location is the plastid. It is found in the chloroplast. It catalyses the reaction (2R)-2-phosphoglycerate = (2R)-3-phosphoglycerate. The protein operates within carbohydrate degradation; glycolysis; pyruvate from D-glyceraldehyde 3-phosphate: step 3/5. In terms of biological role, catalyzes the interconversion of 2-phosphoglycerate and 3-phosphoglycerate. In Arabidopsis thaliana (Mouse-ear cress), this protein is 2,3-bisphosphoglycerate-dependent phosphoglycerate mutase 2.